Reading from the N-terminus, the 153-residue chain is Superoxide dismutase [Cu-Zn] (153 aa).

N24 carries an N-linked (GlcNAc...) asparagine glycan. Residues H47, H49, and H64 each coordinate Cu cation. C58 and C147 are disulfide-bonded. Residues H64, H72, H81, and D84 each coordinate Zn(2+). H121 lines the Cu cation pocket. Basic and acidic residues predominate over residues 126–137; that stretch reads DLGRGGNEESKK. Positions 126–145 are disordered; it reads DLGRGGNEESKKTGNAGPRP. Residue R144 coordinates substrate.

Belongs to the Cu-Zn superoxide dismutase family. As to quaternary structure, homodimer. Cu cation is required as a cofactor. Zn(2+) serves as cofactor.

Its subcellular location is the cytoplasm. The catalysed reaction is 2 superoxide + 2 H(+) = H2O2 + O2. In terms of biological role, destroys radicals which are normally produced within the cells and which are toxic to biological systems. The polypeptide is Superoxide dismutase [Cu-Zn] (Humicola lutea).